Here is a 279-residue protein sequence, read N- to C-terminus: Shikimate dehydrogenase (NADP(+)) (279 aa).

Shikimate-binding positions include 19-21 and threonine 66; that span reads SFS. The active-site Proton acceptor is lysine 70. NADP(+) is bound at residue glutamate 82. 2 residues coordinate shikimate: asparagine 91 and aspartate 106. Residues 130–134 and leucine 222 each bind NADP(+); that span reads GSGGA. Residue tyrosine 224 participates in shikimate binding. Residue glycine 245 coordinates NADP(+).

The protein belongs to the shikimate dehydrogenase family. In terms of assembly, homodimer.

It carries out the reaction shikimate + NADP(+) = 3-dehydroshikimate + NADPH + H(+). Its pathway is metabolic intermediate biosynthesis; chorismate biosynthesis; chorismate from D-erythrose 4-phosphate and phosphoenolpyruvate: step 4/7. In terms of biological role, involved in the biosynthesis of the chorismate, which leads to the biosynthesis of aromatic amino acids. Catalyzes the reversible NADPH linked reduction of 3-dehydroshikimate (DHSA) to yield shikimate (SA). This chain is Shikimate dehydrogenase (NADP(+)), found in Methanococcus maripaludis (strain C6 / ATCC BAA-1332).